The chain runs to 52 residues: Insulin (52 aa).

Intrachain disulfides connect cysteine 7–cysteine 38, cysteine 19–cysteine 51, and cysteine 37–cysteine 42.

The protein belongs to the insulin family. In terms of assembly, heterodimer of a B chain and an A chain linked by two disulfide bonds.

Its subcellular location is the secreted. Insulin decreases blood glucose concentration. It increases cell permeability to monosaccharides, amino acids and fatty acids. It accelerates glycolysis, the pentose phosphate cycle, and glycogen synthesis in liver. In Amia calva (Bowfin), this protein is Insulin (ins).